We begin with the raw amino-acid sequence, 207 residues long: Nodulation protein S (207 aa).

The protein belongs to the NodS family.

Its function is as follows. SAM-utilizing methyltransferase involved in nod factor synthesis. The chain is Nodulation protein S (nodS) from Azorhizobium caulinodans (strain ATCC 43989 / DSM 5975 / JCM 20966 / LMG 6465 / NBRC 14845 / NCIMB 13405 / ORS 571).